The primary structure comprises 423 residues: MSASAVYVLDLKGKVLICRNYRGDVDMSEVEHFMPILMEKEEEGMLSPILAHGGVRFMWIKHNNLYLVATSKKNACVSLVFSFLYKVVQVFSEYFKELEEESIRDNFVIIYELLDELMDFGYPQTTDSKILQEYITQEGHKLETGAPRPPATVTNAVSWRSEGIKYRKNEVFLDVIEAVNLLVSANGNVLRSEIVGSIKMRVFLSGMPELRLGLNDKVLFDNTGRGKSKSVELEDVKFHQCVRLSRFENDRTISFIPPDGEFELMSYRLNTHVKPLIWIESVIEKHSHSRIEYMVKAKSQFKRRSTANNVEIHIPVPNDADSPKFKTTVGSVKWVPENSEIVWSVKSFPGGKEYLMRAHFGLPSVEAEDKEGKPPISVKFEIPYFTTSGIQVRYLKIIEKSGYQALPWVRYITQNGDYQLRTQ.

The residue at position 2 (S2) is an N-acetylserine. Residues T152, T154, and T223 each carry the phosphothreonine modification. An MHD domain is found at 168–421; that stretch reads KNEVFLDVIE…ITQNGDYQLR (254 aa).

It belongs to the adaptor complexes medium subunit family. In terms of assembly, adaptor protein complex 1 (AP-1) is a heterotetramer composed of two large adaptins (gamma-type subunit AP1G1 and beta-type subunit AP1B1), a medium adaptin (mu-type subunit AP1M1 or AP1M2) and a small adaptin (sigma-type subunit AP1S1 or AP1S2 or AP1S3). Interacts with MARCHF11. In terms of processing, phosphorylation of membrane-bound AP1M1/AP1M2 increases its affinity for sorting signals.

It is found in the golgi apparatus. It localises to the cytoplasmic vesicle. The protein localises to the clathrin-coated vesicle membrane. Subunit of clathrin-associated adaptor protein complex 1 that plays a role in protein sorting in the trans-Golgi network (TGN) and endosomes. The AP complexes mediate the recruitment of clathrin to membranes and the recognition of sorting signals within the cytosolic tails of transmembrane cargo molecules. The protein is AP-1 complex subunit mu-1 (Ap1m1) of Mus musculus (Mouse).